A 367-amino-acid polypeptide reads, in one-letter code: Regulator of fusion ref-1 (367 aa).

Residues Met-1–Ala-10 show a composition bias toward pro residues. The tract at residues Met-1 to Arg-24 is disordered. The basic motif 1 stretch occupies residues Tyr-11–Arg-24. The bHLH 1 domain occupies Tyr-11 to Met-63. The tract at residues Asp-25–Met-63 is helix-loop-helix motif 1. 2 disordered regions span residues Arg-133–Arg-177 and Ala-313–Glu-367. A compositionally biased stretch (low complexity) spans Ser-141 to Ser-157. The span at Ile-161 to Arg-177 shows a compositional bias: basic and acidic residues. The tract at residues Asp-162 to Arg-175 is basic motif 2. The region spanning Asp-162–Lys-219 is the bHLH 2 domain. Residues Asp-176–Lys-219 form a helix-loop-helix motif 2 region. A compositionally biased stretch (low complexity) spans Ala-313–Pro-354. Residues Ala-356–Glu-367 show a composition bias toward basic residues.

As to quaternary structure, interacts with unc-37.

The protein resides in the nucleus. Probable transcription factor. Binds 5'-TGCCACGTGTCCA-3' in vitro, probably via the E-box motif 5'-CA[TC][AG]TG-3'. Acts in embryonic development in a Notch-dependent manner, perhaps as a direct target of transcriptional regulator lag-1 in the Notch signaling pathway. Also acts in embryonic development in a Notch-independent manner. Plays a role in both Notch-dependent and -independent pathways in the execution of neuronal lineage decisions in the embryo. Also involved in regulating cell fate leading to formation of neuronal structures known as postdeirids. Involved in the pattern of cell fusion with a large syncytium known as hyp-7, during larval development, in hermaphrodites. Plays a role in regulating the activity of homeobox protein mab-5 in Pn.p cells. This Caenorhabditis elegans protein is Regulator of fusion ref-1.